The sequence spans 361 residues: Chorismate synthase (361 aa).

Residues arginine 48 and arginine 54 each coordinate NADP(+). FMN is bound by residues arginine 125–serine 127, asparagine 238–alanine 239, glycine 278, lysine 293–serine 297, and arginine 319.

It belongs to the chorismate synthase family. As to quaternary structure, homotetramer. Requires FMNH2 as cofactor.

The enzyme catalyses 5-O-(1-carboxyvinyl)-3-phosphoshikimate = chorismate + phosphate. It functions in the pathway metabolic intermediate biosynthesis; chorismate biosynthesis; chorismate from D-erythrose 4-phosphate and phosphoenolpyruvate: step 7/7. Functionally, catalyzes the anti-1,4-elimination of the C-3 phosphate and the C-6 proR hydrogen from 5-enolpyruvylshikimate-3-phosphate (EPSP) to yield chorismate, which is the branch point compound that serves as the starting substrate for the three terminal pathways of aromatic amino acid biosynthesis. This reaction introduces a second double bond into the aromatic ring system. In Vibrio parahaemolyticus serotype O3:K6 (strain RIMD 2210633), this protein is Chorismate synthase.